The following is a 1759-amino-acid chain: Putative ATP-dependent RNA helicase TDRD12 (1759 aa).

In terms of domain architecture, Tudor 1 spans Phe-74–Val-153. The segment covering Asn-480–Ser-495 has biased composition (low complexity). The tract at residues Asn-480 to Asp-506 is disordered. One can recognise a Helicase ATP-binding domain in the interval Trp-611–Ala-789. Residue Ser-624–Thr-631 coordinates ATP. The Helicase C-terminal domain maps to Asn-823–Ser-980. Residues Gly-1335–Gln-1394 enclose the Tudor 2 domain. One can recognise a CS domain in the interval Leu-1618–Thr-1704.

As to quaternary structure, interacts (via Tudor domain 2) with Siwi. Component of the PET complex, at least composed of EXD1, SIWI, TDRD12 and piRNAs. As to expression, expressed in the yolk cells. Not detected in yolk granules.

The protein resides in the chromosome. It is found in the cytoplasm. Its subcellular location is the cytosol. It localises to the nucleus membrane. It catalyses the reaction ATP + H2O = ADP + phosphate + H(+). In terms of biological role, probable ATP-binding RNA helicase required during spermatogenesis to repress transposable elements and preventing their mobilization, which is essential for the germline integrity. Acts via the piRNA metabolic process, which mediates the repression of transposable elements during meiosis by forming complexes composed of piRNAs and Piwi proteins and governs the methylation and subsequent repression of transposons. The chain is Putative ATP-dependent RNA helicase TDRD12 (TDRD12) from Bombyx mori (Silk moth).